The following is a 447-amino-acid chain: Beta-glucuronosyltransferase GlcAT14A (447 aa).

At 1-33 the chain is on the cytoplasmic side; sequence MKKLRSYYSNVRHHQNHHHHHHHHSNIVSSERK. The helical; Signal-anchor for type II membrane protein transmembrane segment at 34–54 threads the bilayer; sequence WIFFPLLIGSIFALFLLFLTT. The Lumenal segment spans residues 55 to 447; the sequence is TLTSPTGGVR…TENFRSKQCK (393 aa). Residues Asn151, Asn200, Asn329, and Asn405 are each glycosylated (N-linked (GlcNAc...) asparagine).

The protein belongs to the glycosyltransferase 14 family.

The protein resides in the golgi apparatus membrane. In terms of biological role, beta-glucuronosyltransferase involved in the biosynthesis of type II arabinogalactan (AG). Modifies both the beta-1,6-linked galactan and beta-1,3-linked galactan present in type II AG. Transfers glucuronate to beta-1,6-galactooligosaccharides with degrees of polymerization ranging from 3 to 11. Transfers glucuronate to beta-1,3-galactooligosaccharides with degrees of polymerization ranging from 5 to 7. The addition of glucuronate at the O6 position may terminate galactose chain extension. Required for cell elongation during seedling growth. The polypeptide is Beta-glucuronosyltransferase GlcAT14A (Arabidopsis thaliana (Mouse-ear cress)).